The primary structure comprises 477 residues: MKVTLPEFERAGVMVVGDVMLDRYWYGPTSRISPEAPVPVVKVNTIEERPGGAANVAMNITSLGANARLVGLTGIDDAARALSKSLADVNVKCDFVSVPTHPTITKLRVLSRNQQLIRLDFEEGFEGVDPQPLHERINQALSSIGALVLSDYAKGALASVQQMIQLARKAGVPVLIDPKGTDFERYRGATLLTPNLSEFEAVVGKCKTEEEIVERGMKLIADYELSALLVTRSEQGMSLLQPGKAPLHMPTQAQEVYDVTGAGDTVIGVLAATLAAGNSLEEACFFANAAAGVVVGKLGTSTVSPIELENAVRGRAETGFGVMTEEELKLAVAAARKRGEKVVMTNGVFDILHAGHVSYLANARKLGDRLIVAVNSDASTKRLKGDSRPVNPLEQRMIVLGALEAVDWVVSFEEDTPQRLIAGILPDLLVKGGDYKPEEIAGSKEVWANGGEVLVLNFEDGCSTTNIIKKIQQDKKG.

The tract at residues 1 to 318 (MKVTLPEFER…ENAVRGRAET (318 aa)) is ribokinase. Position 179 is an N6-acetyllysine (Lys179). 195–198 (NLSE) provides a ligand contact to ATP. Asp264 is an active-site residue. Positions 344–477 (MTNGVFDILH…IKKIQQDKKG (134 aa)) are cytidylyltransferase.

This sequence in the N-terminal section; belongs to the carbohydrate kinase PfkB family. In the C-terminal section; belongs to the cytidylyltransferase family. In terms of assembly, homodimer.

It carries out the reaction D-glycero-beta-D-manno-heptose 7-phosphate + ATP = D-glycero-beta-D-manno-heptose 1,7-bisphosphate + ADP + H(+). It catalyses the reaction D-glycero-beta-D-manno-heptose 1-phosphate + ATP + H(+) = ADP-D-glycero-beta-D-manno-heptose + diphosphate. It functions in the pathway nucleotide-sugar biosynthesis; ADP-L-glycero-beta-D-manno-heptose biosynthesis; ADP-L-glycero-beta-D-manno-heptose from D-glycero-beta-D-manno-heptose 7-phosphate: step 1/4. It participates in nucleotide-sugar biosynthesis; ADP-L-glycero-beta-D-manno-heptose biosynthesis; ADP-L-glycero-beta-D-manno-heptose from D-glycero-beta-D-manno-heptose 7-phosphate: step 3/4. In terms of biological role, catalyzes the phosphorylation of D-glycero-D-manno-heptose 7-phosphate at the C-1 position to selectively form D-glycero-beta-D-manno-heptose-1,7-bisphosphate. Functionally, catalyzes the ADP transfer from ATP to D-glycero-beta-D-manno-heptose 1-phosphate, yielding ADP-D-glycero-beta-D-manno-heptose. This Shigella dysenteriae serotype 1 (strain Sd197) protein is Bifunctional protein HldE.